The chain runs to 253 residues: Histone H1.4 (253 aa).

Residues Met1 to Ser33 are compositionally biased toward low complexity. A disordered region spans residues Met1–Val43. Ser2 is subject to N-acetylserine. The region spanning Ala51–Glu127 is the H15 domain. The interval Lys134 to Ala253 is disordered. Basic and acidic residues-rich tracts occupy residues Ala139–Ala149 and Ala188–Val200. 2 stretches are compositionally biased toward basic residues: residues Lys201–Ala210 and Ala234–Lys244.

The protein belongs to the histone H1/H5 family.

It localises to the nucleus. Its subcellular location is the chromosome. Functionally, histones H1 are necessary for the condensation of nucleosome chains into higher-order structures. This chain is Histone H1.4 (hil-4), found in Caenorhabditis elegans.